A 317-amino-acid polypeptide reads, in one-letter code: Ribosomal RNA small subunit methyltransferase H (317 aa).

S-adenosyl-L-methionine-binding positions include glycine 34–histidine 36, aspartate 53, phenylalanine 80, aspartate 98, and glutamine 105.

It belongs to the methyltransferase superfamily. RsmH family.

The protein resides in the cytoplasm. It carries out the reaction cytidine(1402) in 16S rRNA + S-adenosyl-L-methionine = N(4)-methylcytidine(1402) in 16S rRNA + S-adenosyl-L-homocysteine + H(+). Its function is as follows. Specifically methylates the N4 position of cytidine in position 1402 (C1402) of 16S rRNA. This chain is Ribosomal RNA small subunit methyltransferase H, found in Tropheryma whipplei (strain TW08/27) (Whipple's bacillus).